The following is a 378-amino-acid chain: Putative F-box protein At3g24580 (378 aa).

Positions 1-47 (MTKMSNLPNDLAEEVLSRVSLTSLRNVRLTCKDWNTLSKGESFAKNH) constitute an F-box domain.

This is Putative F-box protein At3g24580 from Arabidopsis thaliana (Mouse-ear cress).